A 228-amino-acid polypeptide reads, in one-letter code: MSLSIFKDLPDEHPRHLIPSLCRQFYHMGWVTGTGGGMSIKLNNEIYIAPSGVQKERMQPEDLFVQDISGKDLQLPPEIKGLTKSQCTPLFMLAYRHRKAGAVIHTHSQHAVMATLLWPGKTFQCTHLEMIKGVYDEADKRYLRYDEKLVVPIIENTPFERDLADSMYAAMMEYPGCSAILVRRHGVYVWGQTWEKAKAMSECYDYLFQLAVEMKKNGLDPEKFEPNC.

Residue Cys87 participates in substrate binding. His105 and His107 together coordinate Zn(2+). The active-site Proton donor/acceptor is the Glu129. His185 provides a ligand contact to Zn(2+).

The protein belongs to the aldolase class II family. MtnB subfamily. Requires Zn(2+) as cofactor.

The protein localises to the cytoplasm. The catalysed reaction is 5-(methylsulfanyl)-D-ribulose 1-phosphate = 5-methylsulfanyl-2,3-dioxopentyl phosphate + H2O. Its pathway is amino-acid biosynthesis; L-methionine biosynthesis via salvage pathway; L-methionine from S-methyl-5-thio-alpha-D-ribose 1-phosphate: step 2/6. Its function is as follows. Catalyzes the dehydration of methylthioribulose-1-phosphate (MTRu-1-P) into 2,3-diketo-5-methylthiopentyl-1-phosphate (DK-MTP-1-P). This chain is Probable methylthioribulose-1-phosphate dehydratase, found in Drosophila willistoni (Fruit fly).